Consider the following 864-residue polypeptide: Coiled-coil and C2 domain-containing protein 1B (864 aa).

The interval 82–154 (QDCMTDMTGE…VNSSVAEIQH (73 aa)) is disordered. Acidic residues-rich tracts occupy residues 89 to 104 (TGED…EELL) and 111 to 129 (VGEE…EESE). A coiled-coil region spans residues 91 to 118 (EDDDDDLEEDEELLAELQDVVGEEEEVE). A compositionally biased stretch (polar residues) spans 142 to 154 (EQQVNSSVAEIQH). The stretch at 162–209 (GMLQVLEERIGNYKEAISNAKLSNESAKARRYERGLKTLESMLSAARQ) forms a coiled coil. The tract at residues 218-249 (IPPPVACGKPAVSPTTDVPTTDTSKQGLGDLN) is disordered. Residues 229–241 (VSPTTDVPTTDTS) show a composition bias toward low complexity. Residues 385 to 412 (VGSLLQALQQRMEKYKSAAQQAKSSGDD) are a coiled coil. Disordered regions lie at residues 441 to 463 (AELP…EEGS) and 478 to 502 (AGED…PTQL). Positions 444-453 (PVPPGFPPLP) are enriched in pro residues. Coiled-coil stretches lie at residues 464 to 488 (VEKA…DEDE) and 535 to 564 (PAVQ…KNDL). Residues 685–820 (HFEDKTLKIV…ETQCEIREIV (136 aa)) form the C2 domain.

It belongs to the CC2D1 family.

This chain is Coiled-coil and C2 domain-containing protein 1B (cc2d1b), found in Xenopus laevis (African clawed frog).